Consider the following 356-residue polypeptide: Dual-specificity RNA methyltransferase RlmN (356 aa).

Catalysis depends on Glu89, which acts as the Proton acceptor. A Radical SAM core domain is found at 108–341; the sequence is KHARYTICVS…CTIRESKGLD (234 aa). A disulfide bond links Cys115 and Cys346. 3 residues coordinate [4Fe-4S] cluster: Cys122, Cys126, and Cys129. S-adenosyl-L-methionine is bound by residues 172-173, Ser204, 227-229, and Asn303; these read GE and SLH. Catalysis depends on Cys346, which acts as the S-methylcysteine intermediate.

Belongs to the radical SAM superfamily. RlmN family. [4Fe-4S] cluster serves as cofactor.

It localises to the cytoplasm. The catalysed reaction is adenosine(2503) in 23S rRNA + 2 reduced [2Fe-2S]-[ferredoxin] + 2 S-adenosyl-L-methionine = 2-methyladenosine(2503) in 23S rRNA + 5'-deoxyadenosine + L-methionine + 2 oxidized [2Fe-2S]-[ferredoxin] + S-adenosyl-L-homocysteine. It carries out the reaction adenosine(37) in tRNA + 2 reduced [2Fe-2S]-[ferredoxin] + 2 S-adenosyl-L-methionine = 2-methyladenosine(37) in tRNA + 5'-deoxyadenosine + L-methionine + 2 oxidized [2Fe-2S]-[ferredoxin] + S-adenosyl-L-homocysteine. In terms of biological role, specifically methylates position 2 of adenine 2503 in 23S rRNA and position 2 of adenine 37 in tRNAs. m2A2503 modification seems to play a crucial role in the proofreading step occurring at the peptidyl transferase center and thus would serve to optimize ribosomal fidelity. The chain is Dual-specificity RNA methyltransferase RlmN from Campylobacter lari (strain RM2100 / D67 / ATCC BAA-1060).